The sequence spans 468 residues: ATP synthase subunit beta (468 aa).

G155–T162 contributes to the ATP binding site.

This sequence belongs to the ATPase alpha/beta chains family. F-type ATPases have 2 components, CF(1) - the catalytic core - and CF(0) - the membrane proton channel. CF(1) has five subunits: alpha(3), beta(3), gamma(1), delta(1), epsilon(1). CF(0) has three main subunits: a(1), b(2) and c(9-12). The alpha and beta chains form an alternating ring which encloses part of the gamma chain. CF(1) is attached to CF(0) by a central stalk formed by the gamma and epsilon chains, while a peripheral stalk is formed by the delta and b chains.

It localises to the cell membrane. It carries out the reaction ATP + H2O + 4 H(+)(in) = ADP + phosphate + 5 H(+)(out). In terms of biological role, produces ATP from ADP in the presence of a proton gradient across the membrane. The catalytic sites are hosted primarily by the beta subunits. This chain is ATP synthase subunit beta, found in Streptococcus pyogenes serotype M49 (strain NZ131).